The primary structure comprises 420 residues: Histidine--tRNA ligase (420 aa).

It belongs to the class-II aminoacyl-tRNA synthetase family. Homodimer.

The protein localises to the cytoplasm. The catalysed reaction is tRNA(His) + L-histidine + ATP = L-histidyl-tRNA(His) + AMP + diphosphate + H(+). This is Histidine--tRNA ligase (hisS) from Mycoplasmopsis pulmonis (strain UAB CTIP) (Mycoplasma pulmonis).